The following is a 190-amino-acid chain: MIKKYRKTKETEISVELEICGSGNAEIDTGIGFFDHMLESFTKHSLIDLKLICKGDLNVDFHHSVEDCGIVLGSALREAIYPIKKIERFGDSVVVMDEAAFSCALDLSNRAFLVFEGPKVGKVGEFDIELLEEFFRAVAFNAGITLHLIKLRGQNLHHLSEAAFKSFAVALRRALSKNERAEIPSTKGIL.

The protein belongs to the imidazoleglycerol-phosphate dehydratase family.

The protein resides in the cytoplasm. It catalyses the reaction D-erythro-1-(imidazol-4-yl)glycerol 3-phosphate = 3-(imidazol-4-yl)-2-oxopropyl phosphate + H2O. Its pathway is amino-acid biosynthesis; L-histidine biosynthesis; L-histidine from 5-phospho-alpha-D-ribose 1-diphosphate: step 6/9. The protein is Imidazoleglycerol-phosphate dehydratase of Campylobacter hominis (strain ATCC BAA-381 / DSM 21671 / CCUG 45161 / LMG 19568 / NCTC 13146 / CH001A).